A 141-amino-acid chain; its full sequence is Large ribosomal subunit protein uL11 (141 aa).

The protein belongs to the universal ribosomal protein uL11 family. In terms of assembly, part of the ribosomal stalk of the 50S ribosomal subunit. Interacts with L10 and the large rRNA to form the base of the stalk. L10 forms an elongated spine to which L12 dimers bind in a sequential fashion forming a multimeric L10(L12)X complex. One or more lysine residues are methylated.

Forms part of the ribosomal stalk which helps the ribosome interact with GTP-bound translation factors. The polypeptide is Large ribosomal subunit protein uL11 (Limosilactobacillus fermentum (strain NBRC 3956 / LMG 18251) (Lactobacillus fermentum)).